The chain runs to 359 residues: Putative nucleotidyltransferase MAB21L1 (359 aa).

Residues 23 to 24 (RK) and 63 to 66 (FEGL) contribute to the a ribonucleoside 5'-triphosphate site. Mg(2+) is bound by residues glutamate 73 and glutamate 75. A ribonucleoside 5'-triphosphate contacts are provided by residues lysine 248 and 252–255 (SLLK).

Belongs to the mab-21 family. As to quaternary structure, monomer. Homodecamer; composed of 2 back to back homopentamers. The protein may exist as monomer in solution and oiligomerizes upon ligand binding.

It localises to the nucleus. Its function is as follows. Putative nucleotidyltransferase required for several aspects of embryonic development including normal development of the eye. It is unclear whether it displays nucleotidyltransferase activity in vivo. Binds single-stranded RNA (ssRNA). The chain is Putative nucleotidyltransferase MAB21L1 (mab21l1) from Danio rerio (Zebrafish).